Consider the following 495-residue polypeptide: Glutelin type-B 2 (495 aa).

The N-terminal stretch at 1 to 24 (MATTIFSRFSIYFCAMLLCQGSMA) is a signal peptide. Cystine bridges form between cysteine 45–cysteine 78 and cysteine 121–cysteine 305. Cupin type-1 domains lie at 50-245 (LQAF…VAAK) and 311-460 (VNIE…EQAR). Residues 464–495 (NNRGEEHGAFTPRFQQQYYPGFSNESESETSE) form a disordered region.

The protein belongs to the 11S seed storage protein (globulins) family. Hexamer; each subunit is composed of an acidic and a basic chain derived from a single precursor and linked by a disulfide bond.

Functionally, seed storage protein. This is Glutelin type-B 2 (GLUB2) from Oryza sativa subsp. japonica (Rice).